The following is a 348-amino-acid chain: tRNA pseudouridine synthase D (348 aa).

Asp84 serves as the catalytic Nucleophile. One can recognise a TRUD domain in the interval 162 to 308; it reads GVPNYFGPQR…ARMDRRPLCL (147 aa).

It belongs to the pseudouridine synthase TruD family.

The catalysed reaction is uridine(13) in tRNA = pseudouridine(13) in tRNA. In terms of biological role, responsible for synthesis of pseudouridine from uracil-13 in transfer RNAs. This is tRNA pseudouridine synthase D from Chromohalobacter salexigens (strain ATCC BAA-138 / DSM 3043 / CIP 106854 / NCIMB 13768 / 1H11).